A 40-amino-acid polypeptide reads, in one-letter code: Beta-defensin 1 (40 aa).

Disulfide bonds link cysteine 7/cysteine 35, cysteine 14/cysteine 29, and cysteine 19/cysteine 36. Glycine 40 is modified (glycine amide).

Monomer. Homodimer.

It localises to the secreted. The protein localises to the membrane. Has antimicrobial activity against the Gram-positive bacteria methicillin-resistant S.aureus ATCC 33591 and L.monocytogenes EGD, the Gram-negative bacterium E.coli ML53p and the yeast C.albicans 820. Has no hemolytic activity towards human erythrocytes. This is Beta-defensin 1 from Emys orbicularis (European pond turtle).